The chain runs to 465 residues: Ribosome biogenesis protein YTM1 (465 aa).

Residues 18–99 (ARLRFSTRDE…ETTLDVEYVR (82 aa)) are ubiquitin-like (UBL) domain. 7 WD repeats span residues 111-153 (LHDD…IHTS), 160-198 (GHQS…KGIT), 205-242 (GHKG…SPAV), 277-317 (GHTA…LVDT), 319-358 (TTSH…TTVS), 364-404 (GHTN…TDTD), and 427-465 (GDGV…PKTA). Positions 235–272 (KKSESPAVPQNLLPSSSARSSKRRKLNSSASTSQRGPL) are disordered.

Belongs to the WD repeat WDR12/YTM1 family. Component of the NOP7 complex, composed of ERB1, NOP7 and YTM1. The complex is held together by ERB1, which interacts with NOP7 via its N-terminal domain and with YTM1 via a high-affinity interaction between the seven-bladed beta-propeller domains of the 2 proteins. The NOP7 complex associates with the 66S pre-ribosome. Interacts (via UBL domain) with MDN1 (via VWFA/MIDAS domain).

The protein localises to the nucleus. It localises to the nucleolus. The protein resides in the nucleoplasm. Its function is as follows. Component of the NOP7 complex, which is required for maturation of the 25S and 5.8S ribosomal RNAs and formation of the 60S ribosome. This is Ribosome biogenesis protein YTM1 from Coccidioides immitis (strain RS) (Valley fever fungus).